The primary structure comprises 874 residues: Alanine--tRNA ligase (874 aa).

Zn(2+) contacts are provided by H562, H566, C665, and H669.

It belongs to the class-II aminoacyl-tRNA synthetase family. Requires Zn(2+) as cofactor.

It localises to the cytoplasm. The catalysed reaction is tRNA(Ala) + L-alanine + ATP = L-alanyl-tRNA(Ala) + AMP + diphosphate. Catalyzes the attachment of alanine to tRNA(Ala) in a two-step reaction: alanine is first activated by ATP to form Ala-AMP and then transferred to the acceptor end of tRNA(Ala). Also edits incorrectly charged Ser-tRNA(Ala) and Gly-tRNA(Ala) via its editing domain. This Pseudomonas putida (strain ATCC 700007 / DSM 6899 / JCM 31910 / BCRC 17059 / LMG 24140 / F1) protein is Alanine--tRNA ligase.